Here is a 130-residue protein sequence, read N- to C-terminus: Small ribosomal subunit protein uS11c (130 aa).

This sequence belongs to the universal ribosomal protein uS11 family. In terms of assembly, part of the 30S ribosomal subunit.

Its subcellular location is the plastid. It is found in the chloroplast. This Zygnema circumcarinatum (Green alga) protein is Small ribosomal subunit protein uS11c.